The primary structure comprises 295 residues: Sulfotransferase 1A1 (295 aa).

48–53 (KSGTTW) lines the 3'-phosphoadenylyl sulfate pocket. Substrate is bound at residue 106-108 (KTH). The active-site Proton acceptor is histidine 108. Residues arginine 130, serine 138, tyrosine 193, 227-232 (TSFKEM), and 255-259 (FMRKG) contribute to the 3'-phosphoadenylyl sulfate site. Phosphoserine is present on serine 138.

This sequence belongs to the sulfotransferase 1 family. In terms of assembly, homodimer. In terms of tissue distribution, liver, lung, adrenal, brain, platelets and skin.

Its subcellular location is the cytoplasm. It catalyses the reaction a phenol + 3'-phosphoadenylyl sulfate = an aryl sulfate + adenosine 3',5'-bisphosphate + H(+). The enzyme catalyses 17beta-estradiol + 3'-phosphoadenylyl sulfate = 17beta-estradiol 3-sulfate + adenosine 3',5'-bisphosphate + H(+). The catalysed reaction is 4-ethylphenol + 3'-phosphoadenylyl sulfate = 4-ethylphenyl sulfate + adenosine 3',5'-bisphosphate + H(+). It carries out the reaction 4-nitrophenol + 3'-phosphoadenylyl sulfate = 4-nitrophenyl sulfate + adenosine 3',5'-bisphosphate. It catalyses the reaction dopamine + 3'-phosphoadenylyl sulfate = dopamine 3-O-sulfate + adenosine 3',5'-bisphosphate + H(+). The enzyme catalyses dopamine + 3'-phosphoadenylyl sulfate = dopamine 4-O-sulfate + adenosine 3',5'-bisphosphate + H(+). The catalysed reaction is 3,3',5-triiodo-L-thyronine + 3'-phosphoadenylyl sulfate = 3,3',5-triiodo-L-thyronine sulfate + adenosine 3',5'-bisphosphate + H(+). It carries out the reaction 3,3',5'-triiodo-L-thyronine + 3'-phosphoadenylyl sulfate = 3,3',5'-triiodo-L-thyronine sulfate + adenosine 3',5'-bisphosphate + H(+). It catalyses the reaction 3,3'-diiodo-L-thyronine + 3'-phosphoadenylyl sulfate = 3,3'-diiodo-L-thyronine sulfate + adenosine 3',5'-bisphosphate + H(+). The enzyme catalyses L-thyroxine + 3'-phosphoadenylyl sulfate = L-thyroxine sulfate + adenosine 3',5'-bisphosphate + H(+). Its function is as follows. Sulfotransferase that utilizes 3'-phospho-5'-adenylyl sulfate (PAPS) as sulfonate donor to catalyze the sulfate conjugation of a wide variety of acceptor molecules bearing a hydroxyl or an amine group. Sulfonation increases the water solubility of most compounds, and therefore their renal excretion, but it can also result in bioactivation to form active metabolites. Displays broad substrate specificity for small phenolic compounds. Plays an important role in the sulfonation of endogenous molecules such as steroid hormones. Mediates the sulfate conjugation of a variety of xenobiotics, including the drugs acetaminophen and minoxidil. Mediates also the metabolic activation of carcinogenic N-hydroxyarylamines leading to highly reactive intermediates capable of forming DNA adducts, potentially resulting in mutagenesis. May play a role in gut microbiota-host metabolic interaction. O-sulfonates 4-ethylphenol (4-EP), a dietary tyrosine-derived metabolite produced by gut bacteria. The product 4-EPS crosses the blood-brain barrier and may negatively regulate oligodendrocyte maturation and myelination, affecting the functional connectivity of different brain regions associated with the limbic system. Catalyzes the sulfate conjugation of dopamine. Catalyzes the sulfation of T4 (L-thyroxine/3,5,3',5'-tetraiodothyronine), T3 (3,5,3'-triiodothyronine), rT3 (3,3',5'-triiodothyronine) and 3,3'-T2 (3,3'-diiodothyronine), with a substrate preference of 3,3'-T2 &gt; rT3 &gt; T3 &gt; T4. This is Sulfotransferase 1A1 (SULT1A1) from Homo sapiens (Human).